The following is a 393-amino-acid chain: Squamosa promoter-binding-like protein 17 (393 aa).

The segment covering 40 to 49 (AAAVESSSTS) has biased composition (low complexity). A disordered region spans residues 40–67 (AAAVESSSTSSGGGGKKGKGVAAAAAPP). Residues 71–148 (PPRCQVEGCG…AGHNERRRKP (78 aa)) form an SBP-type zinc finger. Residues Cys-74, Cys-79, Cys-96, His-99, Cys-115, Cys-118, His-122, and Cys-134 each contribute to the Zn(2+) site. Residues 131–147 (KKSCRRRLAGHNERRRK) carry the Bipartite nuclear localization signal motif. A compositionally biased stretch (basic residues) spans 137–148 (RLAGHNERRRKP). Disordered regions lie at residues 137-158 (RLAG…SRYG), 273-301 (WDTT…GNNP), and 317-393 (GWNS…NWSL). 2 stretches are compositionally biased toward polar residues: residues 273 to 293 (WDTT…STAS) and 380 to 393 (GAFS…NWSL).

As to expression, expressed in young panicles.

It is found in the nucleus. Functionally, trans-acting factor that binds specifically to the consensus nucleotide sequence 5'-TNCGTACAA-3'. May be involved in panicle development. This chain is Squamosa promoter-binding-like protein 17 (SPL17), found in Oryza sativa subsp. japonica (Rice).